A 307-amino-acid chain; its full sequence is Homoserine O-acetyltransferase (307 aa).

Cys142 functions as the Acyl-thioester intermediate in the catalytic mechanism. The substrate site is built by Lys163 and Ser192. His235 serves as the catalytic Proton acceptor. Glu237 is a catalytic residue. Arg249 is a binding site for substrate.

The protein belongs to the MetA family.

It localises to the cytoplasm. It carries out the reaction L-homoserine + acetyl-CoA = O-acetyl-L-homoserine + CoA. It functions in the pathway amino-acid biosynthesis; L-methionine biosynthesis via de novo pathway; O-acetyl-L-homoserine from L-homoserine: step 1/1. Functionally, transfers an acetyl group from acetyl-CoA to L-homoserine, forming acetyl-L-homoserine. In Rhizobium johnstonii (strain DSM 114642 / LMG 32736 / 3841) (Rhizobium leguminosarum bv. viciae), this protein is Homoserine O-acetyltransferase.